The sequence spans 449 residues: Lysine-sensitive aspartokinase 3 (449 aa).

The aspartokinase stretch occupies residues 2-245; it reads SEIVVSKFGG…AAKRIDEIAF (244 aa). 8–11 contributes to the ATP binding site; sequence KFGG. Residues threonine 45, glutamate 119, and 198–201 each bind substrate; that span reads RGGS. ATP contacts are provided by residues 221–222, tyrosine 227, arginine 232, and 257–258; these read TD and KV. The tract at residues 246–449 is interface; it reads AEAAEMATFG…VQKLHSNLFE (204 aa). The required for homodimerization stretch occupies residues 299–449; that stretch reads FRALALRRNQ…VQKLHSNLFE (151 aa). One can recognise an ACT domain in the interval 313 to 394; sequence LHSLNMLHSR…GLALVALIGN (82 aa). L-lysine contacts are provided by residues methionine 318, serine 321, 324–325, 338–340, and 345–346; these read FL, SVD, and SE.

The protein belongs to the aspartokinase family. In terms of assembly, homodimer. In the inactive form a homotetramer is formed.

The catalysed reaction is L-aspartate + ATP = 4-phospho-L-aspartate + ADP. Its pathway is amino-acid biosynthesis; L-lysine biosynthesis via DAP pathway; (S)-tetrahydrodipicolinate from L-aspartate: step 1/4. Its activity is regulated as follows. Synthesis and activity are sensitive to the allosteric inhibitor lysine, one of the end metabolites of the aspartic acid family branched pathway. The protein is Lysine-sensitive aspartokinase 3 (lysC) of Escherichia coli (strain K12).